A 504-amino-acid chain; its full sequence is Maturase K (504 aa).

It belongs to the intron maturase 2 family. MatK subfamily.

The protein resides in the plastid. It is found in the chloroplast. Usually encoded in the trnK tRNA gene intron. Probably assists in splicing its own and other chloroplast group II introns. In Quercus gemelliflora (Pasang hiris), this protein is Maturase K.